A 664-amino-acid polypeptide reads, in one-letter code: Ent-copalyl diphosphate synthase 5 (664 aa).

A substrate-binding site is contributed by Lys-101. Residues Asp-233 and Asp-235 each coordinate Mg(2+). A DXDD motif motif is present at residues 233-236 (DIDD). Substrate is bound at residue Lys-320.

This sequence belongs to the terpene synthase family. Tpsc subfamily. It depends on Mg(2+) as a cofactor. Ubiquitous expression in roots, stems, leaves and flowers.

It localises to the plastid. Its subcellular location is the chloroplast. It carries out the reaction (2E,6E,10E)-geranylgeranyl diphosphate = ent-copalyl diphosphate. Its pathway is secondary metabolite biosynthesis; terpenoid biosynthesis. Its function is as follows. Involved in the biosynthesis of ent-kaurene diterpenoids natural products such as oridonin, miltiradiene, eriocalyxin B and nezukol, known to exhibit antitumor, anti-inflammatory and antibacterial activities. Catalyzes the conversion of (2E,6E,10E)-geranylgeranyl diphosphate (GGPP) to ent-copalyl diphosphate (ent-CPP). The protein is Ent-copalyl diphosphate synthase 5 of Isodon rubescens (Rabdosia rubescens).